A 588-amino-acid polypeptide reads, in one-letter code: Neopullulanase (588 aa).

Ca(2+)-binding residues include N147, N149, S153, G172, and D174. Residues H247 and R326 each contribute to the substrate site. D328 serves as the catalytic Nucleophile. E357 functions as the Proton donor in the catalytic mechanism. Substrate-binding positions include 423 to 424, D468, and R472; that span reads HD.

It belongs to the glycosyl hydrolase 13 family. In terms of assembly, homodimer. Requires Ca(2+) as cofactor.

It carries out the reaction Hydrolysis of pullulan to panose (6-alpha-D-glucosylmaltose).. In terms of biological role, hydrolyzes pullulan efficiently but only a small amount of starch. Endohydrolysis of 1,4-alpha-glucosidic linkages in pullulan to form panose. Also cleaves (1-6)-alpha-glucosidic linkages to form maltotriose. In Geobacillus stearothermophilus (Bacillus stearothermophilus), this protein is Neopullulanase (nplT).